We begin with the raw amino-acid sequence, 178 residues long: Cell division protein ZapC (178 aa).

The protein belongs to the ZapC family. In terms of assembly, interacts directly with FtsZ.

The protein resides in the cytoplasm. Functionally, contributes to the efficiency of the cell division process by stabilizing the polymeric form of the cell division protein FtsZ. Acts by promoting interactions between FtsZ protofilaments and suppressing the GTPase activity of FtsZ. This chain is Cell division protein ZapC, found in Pseudoalteromonas atlantica (strain T6c / ATCC BAA-1087).